The primary structure comprises 301 residues: uncharacterized protein (301 aa).

An N-terminal signal peptide occupies residues 1–28 (MFFREDKSVAFRLRSAALSGCATGQSDA).

This is an uncharacterized protein from Treponema pallidum (strain Nichols).